The sequence spans 464 residues: UDP-N-acetylmuramoylalanine--D-glutamate ligase (464 aa).

112–118 (GTDGKTT) lines the ATP pocket.

It belongs to the MurCDEF family.

Its subcellular location is the cytoplasm. The catalysed reaction is UDP-N-acetyl-alpha-D-muramoyl-L-alanine + D-glutamate + ATP = UDP-N-acetyl-alpha-D-muramoyl-L-alanyl-D-glutamate + ADP + phosphate + H(+). It participates in cell wall biogenesis; peptidoglycan biosynthesis. Cell wall formation. Catalyzes the addition of glutamate to the nucleotide precursor UDP-N-acetylmuramoyl-L-alanine (UMA). This is UDP-N-acetylmuramoylalanine--D-glutamate ligase from Chlorobium chlorochromatii (strain CaD3).